Consider the following 124-residue polypeptide: Modulator protein MzrA (124 aa).

Residues 1-7 (MINRRMK) are Cytoplasmic-facing. Residues 8 to 28 (TGFVFHLLLLLLPLVVLVTSS) traverse the membrane as a helical segment. The Periplasmic portion of the chain corresponds to 29-124 (RRTADDVTLH…KLSQQPFKLG (96 aa)).

This sequence belongs to the MzrA family. Interacts with EnvZ.

Its subcellular location is the cell inner membrane. Functionally, modulates the activity of the EnvZ/OmpR two-component regulatory system, probably by directly modulating EnvZ enzymatic activity and increasing stability of phosphorylated OmpR. This is Modulator protein MzrA from Musicola paradisiaca (strain Ech703) (Dickeya paradisiaca).